We begin with the raw amino-acid sequence, 428 residues long: Sialidase-3 (428 aa).

The FRIP motif signature appears at 24 to 27 (YRIP). Residues Arg25 and Arg45 each coordinate substrate. The active-site Proton acceptor is Asp50. The BNR 1 repeat unit spans residues 129–140 (ICSQDAGYSWSD). Substrate is bound by residues Tyr179 and Tyr181. A BNR 2 repeat occupies 203 to 214 (IYSDDLGATWHH). Positions 225 and 245 each coordinate substrate. One copy of the BNR 3 repeat lies at 254–265 (ALSIDHGECFQK). The residue at position 314 (Ser314) is a Phosphoserine. Residue Arg341 coordinates substrate. Tyr371 (nucleophile) is an active-site residue. The active site involves Glu388.

Belongs to the glycosyl hydrolase 33 family. In terms of assembly, interacts with CAV1; this interaction enhances NEU3 sialidase activity within caveola. Interacts with EGFR; this interaction mediates desialylation of EGFR and enhances downstream signaling. Post-translationally, palmitoylated; may regulate intracellular trafficking and anchorage to plasma membrane and endomembranes. Expressed in brain.

It is found in the cell membrane. The protein localises to the membrane. It localises to the caveola. Its subcellular location is the early endosome membrane. The protein resides in the recycling endosome membrane. It is found in the lysosome membrane. It catalyses the reaction Hydrolysis of alpha-(2-&gt;3)-, alpha-(2-&gt;6)-, alpha-(2-&gt;8)- glycosidic linkages of terminal sialic acid residues in oligosaccharides, glycoproteins, glycolipids, colominic acid and synthetic substrates.. The enzyme catalyses a ganglioside GD1a + H2O = a ganglioside GM1 + N-acetylneuraminate. It carries out the reaction a ganglioside GD1a (d18:1(4E)) + H2O = a ganglioside GM1 (d18:1(4E)) + N-acetylneuraminate. The catalysed reaction is a ganglioside GD1b + H2O = a ganglioside GM1 + N-acetylneuraminate. It catalyses the reaction a ganglioside GD1b (d18:1(4E)) + H2O = a ganglioside GM1 (d18:1(4E)) + N-acetylneuraminate. The enzyme catalyses a ganglioside GD3 + H2O = a ganglioside GM3 + N-acetylneuraminate. It carries out the reaction a ganglioside GD3 (d18:1(4E)) + H2O = a ganglioside GM3 (d18:1(4E)) + N-acetylneuraminate. The catalysed reaction is a ganglioside GM3 + H2O = a beta-D-galactosyl-(1-&gt;4)-beta-D-glucosyl-(1&lt;-&gt;1)-ceramide + N-acetylneuraminate. It catalyses the reaction a ganglioside GM1 + H2O = a ganglioside GA1 + N-acetylneuraminate. The enzyme catalyses a ganglioside GM1 (d18:1(4E)) + H2O = a ganglioside GA1 (d18:1(4E)) + N-acetylneuraminate. It carries out the reaction a ganglioside GM2 (d18:1(4E)) + H2O = a ganglioside GA2 (d18:1(4E)) + N-acetylneuraminate. The catalysed reaction is a ganglioside GM3 (d18:1(4E)) + H2O = a beta-D-Gal-(1-&gt;4)-beta-D-Glc-(1&lt;-&gt;1)-Cer(d18:1(4E)) + N-acetylneuraminate. It catalyses the reaction a ganglioside GT1b + H2O = a ganglioside GD1b + N-acetylneuraminate. In terms of biological role, exo-alpha-sialidase that catalyzes the hydrolytic cleavage of the terminal sialic acid (N-acetylneuraminic acid, Neu5Ac) of a glycan moiety in the catabolism of glycolipids, glycoproteins and oligosacharides. Displays high catalytic efficiency for gangliosides including alpha-(2-&gt;3)-sialylated GD1a and GM3 and alpha-(2-&gt;8)-sialylated GD3. Plays a role in the regulation of transmembrane signaling through the modulation of ganglioside content of the lipid bilayer and by direct interaction with signaling receptors, such as EGFR. Desialylates EGFR and activates downstream signaling in proliferating cells. Contributes to clathrin-mediated endocytosis by regulating sorting of endocytosed receptors to early and recycling endosomes. The protein is Sialidase-3 (NEU3) of Bos taurus (Bovine).